The sequence spans 564 residues: Mitochondrial distribution and morphology protein 34-1 (564 aa).

One can recognise an SMP-LTD domain in the interval 1–195 (MAFKFNWSPL…LPAIIHRLSL (195 aa)). 2 stretches are compositionally biased toward polar residues: residues 297-322 (PDQN…SQTG) and 329-352 (DNAS…SSYG). Disordered stretches follow at residues 297-408 (PDQN…VTSA), 414-433 (HEQP…DQSL), and 452-473 (DLSS…PFNT). The span at 359 to 371 (RHSRAHARRRKKR) shows a compositional bias: basic residues. Residues 383–394 (SDSASVSVSDES) are compositionally biased toward low complexity. A compositionally biased stretch (polar residues) spans 396-408 (YTESASAPSVTSA). Basic and acidic residues predominate over residues 452–466 (DLSSEIVRDRAEPSE).

Belongs to the MDM34 family. Component of the ER-mitochondria encounter structure (ERMES) or MDM complex, composed of mmm1, mdm10, mdm12 and mdm34.

It localises to the mitochondrion outer membrane. Its function is as follows. Component of the ERMES/MDM complex, which serves as a molecular tether to connect the endoplasmic reticulum (ER) and mitochondria. Components of this complex are involved in the control of mitochondrial shape and protein biogenesis, and function in nonvesicular lipid trafficking between the ER and mitochondria. Mdm34 is required for the interaction of the ER-resident membrane protein mmm1 and the outer mitochondrial membrane-resident beta-barrel protein mdm10. The sequence is that of Mitochondrial distribution and morphology protein 34-1 from Penicillium rubens (strain ATCC 28089 / DSM 1075 / NRRL 1951 / Wisconsin 54-1255) (Penicillium chrysogenum).